We begin with the raw amino-acid sequence, 364 residues long: Growth hormone secretagogue receptor type 1 (364 aa).

Topologically, residues 1–40 (MWNATPSEEPEPNVTLDLDWDASPGNDSLPDELLPLFPAP) are extracellular. 2 N-linked (GlcNAc...) asparagine glycosylation sites follow: Asn-13 and Asn-26. A helical transmembrane segment spans residues 41–66 (LLAGVTATCVALFVVGISGNLLTMLV). Topologically, residues 67–72 (VSRFRE) are cytoplasmic. The helical transmembrane segment at 73-96 (LRTTTNLYLSSMAFSDLLIFLCMP) threads the bilayer. Residues 97 to 117 (LDLVRLWQYRPWNFGDLLCKL) are Extracellular-facing. An intrachain disulfide couples Cys-115 to Cys-197. The chain crosses the membrane as a helical span at residues 118–139 (FQFVSESCTYATVLTITALSVE). The Cytoplasmic portion of the chain corresponds to 140–162 (RYFAICFPLRAKVVVTKGRVKLV). The chain crosses the membrane as a helical span at residues 163–183 (ILVIWAVAFCSAGPIFVLVGV). The Extracellular portion of the chain corresponds to 184–211 (EHENGTDPRDTNECRATEFAVRSGLLTV). N-linked (GlcNAc...) asparagine glycosylation occurs at Asn-187. The chain crosses the membrane as a helical span at residues 212–235 (MVWVSSVFFFLPVFCLTVLYSLIG). At 236 to 263 (RKLWRRRGDAAVGASLRDQNHKQTVKML) the chain is on the cytoplasmic side. The helical transmembrane segment at 264-285 (AVVVFAFILCWLPFHVGRYLFS) threads the bilayer. The Extracellular portion of the chain corresponds to 286 to 302 (KSFEPGSLEIAQISQYC). A helical transmembrane segment spans residues 303–326 (NLVSFVLFYLSAAINPILYNIMSK). Topologically, residues 327-364 (KYRVAVFKLLGFESFSQRKLSTLKDESSRAWTKSSINT) are cytoplasmic.

This sequence belongs to the G-protein coupled receptor 1 family.

The protein resides in the cell membrane. Receptor for ghrelin, coupled to G-alpha-11 proteins. Stimulates growth hormone secretion. Also binds other growth hormone releasing peptides (GHRP) (e.g. Met-enkephalin and GHRP-6) as well as non-peptide, low molecular weight secretagogues (e.g. L-692,429, MK-0677, adenosine). This chain is Growth hormone secretagogue receptor type 1 (Ghsr), found in Rattus norvegicus (Rat).